We begin with the raw amino-acid sequence, 311 residues long: Glycerol-3-phosphate dehydrogenase [NAD(P)+] (311 aa).

NADPH contacts are provided by Trp-11, Arg-30, Arg-31, and Lys-95. Residues Lys-95, Gly-123, and Ser-125 each contribute to the sn-glycerol 3-phosphate site. Ala-127 is an NADPH binding site. Positions 177, 230, 240, 241, and 242 each coordinate sn-glycerol 3-phosphate. Catalysis depends on Lys-177, which acts as the Proton acceptor. Arg-241 provides a ligand contact to NADPH. NADPH contacts are provided by Val-265 and Glu-267.

This sequence belongs to the NAD-dependent glycerol-3-phosphate dehydrogenase family.

The protein localises to the cytoplasm. The catalysed reaction is sn-glycerol 3-phosphate + NAD(+) = dihydroxyacetone phosphate + NADH + H(+). It catalyses the reaction sn-glycerol 3-phosphate + NADP(+) = dihydroxyacetone phosphate + NADPH + H(+). The protein operates within membrane lipid metabolism; glycerophospholipid metabolism. Functionally, catalyzes the reduction of the glycolytic intermediate dihydroxyacetone phosphate (DHAP) to sn-glycerol 3-phosphate (G3P), the key precursor for phospholipid synthesis. The protein is Glycerol-3-phosphate dehydrogenase [NAD(P)+] of Bartonella bacilliformis (strain ATCC 35685 / KC583 / Herrer 020/F12,63).